Consider the following 71-residue polypeptide: 8.6 kDa protein (71 aa).

The protein is 8.6 kDa protein of Pseudomonas phage Pf1 (Bacteriophage Pf1).